The primary structure comprises 465 residues: Adenosine 3'-phospho 5'-phosphosulfate transporter 1 (465 aa).

A run of 10 helical transmembrane segments spans residues 13–33 (LVIC…SDLL), 61–81 (FLKL…GFLI), 142–162 (AVQL…WGVL), 185–205 (QFLV…YLQW), 270–290 (SYEY…MSGS), 299–319 (VTTL…SFTA), 339–359 (GVNL…GGFM), 370–390 (KFVF…LFIY), 391–407 (HTID…IMTL), and 424–444 (ISLL…LRVY).

It belongs to the nucleotide-sugar transporter family. SLC35B subfamily. In terms of tissue distribution, expressed throughout embryogenesis. During oogenesis, it is expressed strongly in the nurse cells of the germline. Maternally expressed at the syncytial blastoderm stage. Zygotically expressed, from after germ-band elongation in the invaginating salivary gland placodes. Remains expressed predominantly in this tissue throughout embryogenesis, but low-level expression may also be present throughout the embryo.

It is found in the golgi apparatus membrane. Its function is as follows. Mediates the transport of adenosine 3'-phospho 5'-phosphosulfate (PAPS), from cytosol into Golgi. PAPS is a universal sulfuryl donor for sulfation events that take place in the Golgi. Required for the dorsoventral patterning, suggesting that it mediates the transport of the sulfate donor required for the sulfotransferase activity of pip (pipe). The protein is Adenosine 3'-phospho 5'-phosphosulfate transporter 1 (sll) of Drosophila melanogaster (Fruit fly).